Consider the following 458-residue polypeptide: Cysteine--tRNA ligase (458 aa).

A Zn(2+)-binding site is contributed by C33. Positions P35–N45 match the 'HIGH' region motif. C221, H246, and E250 together coordinate Zn(2+). The 'KMSKS' region signature appears at K279 to S283. K282 serves as a coordination point for ATP.

This sequence belongs to the class-I aminoacyl-tRNA synthetase family. Monomer. The cofactor is Zn(2+).

It is found in the cytoplasm. The enzyme catalyses tRNA(Cys) + L-cysteine + ATP = L-cysteinyl-tRNA(Cys) + AMP + diphosphate. The polypeptide is Cysteine--tRNA ligase (Rhizobium etli (strain ATCC 51251 / DSM 11541 / JCM 21823 / NBRC 15573 / CFN 42)).